Consider the following 150-residue polypeptide: Putative pre-16S rRNA nuclease (150 aa).

The protein belongs to the YqgF nuclease family.

It localises to the cytoplasm. In terms of biological role, could be a nuclease involved in processing of the 5'-end of pre-16S rRNA. The protein is Putative pre-16S rRNA nuclease of Protochlamydia amoebophila (strain UWE25).